The chain runs to 431 residues: Histidinol dehydrogenase (431 aa).

NAD(+) contacts are provided by Y127, Q189, and N212. Substrate-binding residues include S237, Q259, and H262. Positions 259 and 262 each coordinate Zn(2+). Catalysis depends on proton acceptor residues E326 and H327. Residues H327, D360, E414, and H419 each contribute to the substrate site. D360 provides a ligand contact to Zn(2+). A Zn(2+)-binding site is contributed by H419.

The protein belongs to the histidinol dehydrogenase family. It depends on Zn(2+) as a cofactor.

The enzyme catalyses L-histidinol + 2 NAD(+) + H2O = L-histidine + 2 NADH + 3 H(+). It participates in amino-acid biosynthesis; L-histidine biosynthesis; L-histidine from 5-phospho-alpha-D-ribose 1-diphosphate: step 9/9. Catalyzes the sequential NAD-dependent oxidations of L-histidinol to L-histidinaldehyde and then to L-histidine. In Xanthomonas axonopodis pv. citri (strain 306), this protein is Histidinol dehydrogenase.